The following is a 139-amino-acid chain: Nucleoside diphosphate kinase (139 aa).

ATP is bound by residues lysine 10, phenylalanine 58, arginine 86, threonine 92, arginine 103, and asparagine 113. Residue histidine 116 is the Pros-phosphohistidine intermediate of the active site.

Belongs to the NDK family. Homotetramer. Mg(2+) is required as a cofactor.

It localises to the cytoplasm. The catalysed reaction is a 2'-deoxyribonucleoside 5'-diphosphate + ATP = a 2'-deoxyribonucleoside 5'-triphosphate + ADP. The enzyme catalyses a ribonucleoside 5'-diphosphate + ATP = a ribonucleoside 5'-triphosphate + ADP. Major role in the synthesis of nucleoside triphosphates other than ATP. The ATP gamma phosphate is transferred to the NDP beta phosphate via a ping-pong mechanism, using a phosphorylated active-site intermediate. The polypeptide is Nucleoside diphosphate kinase (Nitratidesulfovibrio vulgaris (strain ATCC 29579 / DSM 644 / CCUG 34227 / NCIMB 8303 / VKM B-1760 / Hildenborough) (Desulfovibrio vulgaris)).